The chain runs to 531 residues: Putative heme-binding protein HQ_1094A (531 aa).

His177 contributes to the heme binding site. Residues 269-340 (AHGEAHGHAH…STNTNTQDSE (72 aa)) are disordered. Residues 271-281 (GEAHGHAHGDS) are compositionally biased toward basic and acidic residues. A compositionally biased stretch (gly residues) spans 284-306 (GSGGGGGSSHGQSPGGASAGGSA). The segment covering 308 to 317 (GTEDADHSDS) has biased composition (basic and acidic residues). Residues 318–338 (RSTTSADTTQSDTSTNTNTQD) are compositionally biased toward low complexity. The ABM domain maps to 441–529 (GTMGMFYTVK…VLSERPRHVF (89 aa)).

In the N-terminal section; belongs to the ChdC family.

In Haloquadratum walsbyi (strain DSM 16790 / HBSQ001), this protein is Putative heme-binding protein HQ_1094A.